Consider the following 147-residue polypeptide: Phospholipase A2 SSD1043 (147 aa).

A signal peptide spans 1 to 22 (MSPKFMFFSIIAVWSCAAVTEA). A propeptide spanning residues 23-28 (LFIQHR) is cleaved from the precursor. Disulfide bonds link cysteine 55–cysteine 71, cysteine 70–cysteine 130, cysteine 77–cysteine 123, cysteine 86–cysteine 116, and cysteine 109–cysteine 121. Residues glycine 56 and glycine 58 each contribute to the Ca(2+) site. Residue histidine 74 is part of the active site. Aspartate 75 provides a ligand contact to Ca(2+). Residue aspartate 124 is part of the active site.

The cofactor is Ca(2+). As to expression, expressed by the venom gland.

The protein resides in the secreted. The catalysed reaction is a 1,2-diacyl-sn-glycero-3-phosphocholine + H2O = a 1-acyl-sn-glycero-3-phosphocholine + a fatty acid + H(+). PLA2 catalyzes the calcium-dependent hydrolysis of the 2-acyl groups in 3-sn-phosphoglycerides. The protein is Phospholipase A2 SSD1043 of Scolopendra dehaani (Thai centipede).